Reading from the N-terminus, the 290-residue chain is Diaminopimelate epimerase (290 aa).

Residues asparagine 14 and asparagine 67 each coordinate substrate. Catalysis depends on cysteine 76, which acts as the Proton donor. Substrate-binding positions include 77–78, asparagine 166, asparagine 199, and 217–218; these read GN and ER. The active-site Proton acceptor is cysteine 226. 227 to 228 contacts substrate; that stretch reads GT.

It belongs to the diaminopimelate epimerase family. Homodimer.

The protein resides in the cytoplasm. It carries out the reaction (2S,6S)-2,6-diaminopimelate = meso-2,6-diaminopimelate. It participates in amino-acid biosynthesis; L-lysine biosynthesis via DAP pathway; DL-2,6-diaminopimelate from LL-2,6-diaminopimelate: step 1/1. Catalyzes the stereoinversion of LL-2,6-diaminopimelate (L,L-DAP) to meso-diaminopimelate (meso-DAP), a precursor of L-lysine and an essential component of the bacterial peptidoglycan. The polypeptide is Diaminopimelate epimerase (Geobacillus thermodenitrificans (strain NG80-2)).